A 577-amino-acid polypeptide reads, in one-letter code: Peroxynitrite isomerase THAP4 (577 aa).

The THAP-type zinc finger occupies 1–85 (MVICCAAVNC…LKPTAVPSIF (85 aa)). A disordered region spans residues 84-221 (IFHLTEKKRG…DKSGISMDDF (138 aa)). The span at 157-170 (AAQEAASQEQAQQA) shows a compositional bias: low complexity. At Ser-163 the chain carries Phosphoserine. The HCFC1-binding motif (HBM) motif lies at 235–238 (LHSY). Phosphoserine is present on Ser-239. A disordered region spans residues 240 to 324 (FSSKHTRERP…AVQSEHSDAS (85 aa)). Basic and acidic residues predominate over residues 247-266 (ERPSVPREPIDRKRLKKDVE). The segment covering 290–300 (TATPQKPSQSP) has biased composition (low complexity). The interval 415–577 (PPKMNPVVEP…LHVTYKKVTP (163 aa)) is nitrobindin. Residues Thr-444 and His-567 each coordinate heme b.

In the C-terminal section; belongs to the nitrobindin family. Homodimer. The cofactor is heme b.

It localises to the cytoplasm. The protein localises to the nucleus. It carries out the reaction peroxynitrite = nitrate. The protein operates within nitrogen metabolism. Its function is as follows. Heme-binding protein able to scavenge peroxynitrite and to protect free L-tyrosine against peroxynitrite-mediated nitration, by acting as a peroxynitrite isomerase that converts peroxynitrite to nitrate. Therefore, this protein likely plays a role in peroxynitrite sensing and in the detoxification of reactive nitrogen and oxygen species (RNS and ROS, respectively). Is able to bind nitric oxide (NO) in vitro, but may act as a sensor of peroxynitrite levels in vivo, possibly modulating the transcriptional activity residing in the N-terminal region. The polypeptide is Peroxynitrite isomerase THAP4 (Homo sapiens (Human)).